We begin with the raw amino-acid sequence, 153 residues long: 3-hydroxyacyl-[acyl-carrier-protein] dehydratase FabZ (153 aa).

The active site involves His-57.

It belongs to the thioester dehydratase family. FabZ subfamily.

It is found in the cytoplasm. The catalysed reaction is a (3R)-hydroxyacyl-[ACP] = a (2E)-enoyl-[ACP] + H2O. In terms of biological role, involved in unsaturated fatty acids biosynthesis. Catalyzes the dehydration of short chain beta-hydroxyacyl-ACPs and long chain saturated and unsaturated beta-hydroxyacyl-ACPs. In Aeromonas salmonicida (strain A449), this protein is 3-hydroxyacyl-[acyl-carrier-protein] dehydratase FabZ.